The chain runs to 354 residues: Chorismate synthase (354 aa).

Arg-48 contacts NADP(+). Residues 126–128 (RAS), Ala-278, 293–297 (KPIPS), and Arg-319 contribute to the FMN site.

The protein belongs to the chorismate synthase family. In terms of assembly, homotetramer. FMNH2 serves as cofactor.

The enzyme catalyses 5-O-(1-carboxyvinyl)-3-phosphoshikimate = chorismate + phosphate. Its pathway is metabolic intermediate biosynthesis; chorismate biosynthesis; chorismate from D-erythrose 4-phosphate and phosphoenolpyruvate: step 7/7. In terms of biological role, catalyzes the anti-1,4-elimination of the C-3 phosphate and the C-6 proR hydrogen from 5-enolpyruvylshikimate-3-phosphate (EPSP) to yield chorismate, which is the branch point compound that serves as the starting substrate for the three terminal pathways of aromatic amino acid biosynthesis. This reaction introduces a second double bond into the aromatic ring system. The chain is Chorismate synthase from Desulfosudis oleivorans (strain DSM 6200 / JCM 39069 / Hxd3) (Desulfococcus oleovorans).